The primary structure comprises 116 residues: Cysteine proteinase inhibitor 1 (116 aa).

A signal peptide spans Met-1–Leu-26. The Cystatin domain maps to Gly-30–Gly-89. Residues Gln-73 to Gly-77 carry the Secondary area of contact motif. Asn-109 carries N-linked (GlcNAc...) asparagine glycosylation.

It belongs to the cystatin family. Phytocystatin subfamily. Glycosylated.

It is found in the secreted. Specific inhibitor of papain family cysteine proteinases. Inhibits papain, chymopapain, bromelain, ficin, human cathepsins B, H and L, actinidain and house dustmite endopeptidase 1, but does not inhibit human bleomycin hydrolase. Inhibits papain with an IC(50) of 2.47 nM. Does not inhibit cysteine proteinases belonging to other families including clostripain, streptopain and calpain. The protein is Cysteine proteinase inhibitor 1 of Actinidia deliciosa (Kiwi).